Consider the following 564-residue polypeptide: Potassium-transporting ATPase potassium-binding subunit (564 aa).

10 consecutive transmembrane segments (helical) span residues 4 to 24 (YDYW…PFLG), 67 to 87 (MLAL…ILLF), 135 to 155 (AGLT…LVAL), 179 to 199 (LYGL…QGVP), 254 to 274 (WANL…VFTF), 286 to 306 (AILG…LWAE), 382 to 402 (AGMY…GLMI), 420 to 440 (LLVV…AIAA), 487 to 507 (LMLG…VLAL), and 528 to 548 (GPLF…LTFL).

The protein belongs to the KdpA family. In terms of assembly, the system is composed of three essential subunits: KdpA, KdpB and KdpC.

Its subcellular location is the cell inner membrane. Its function is as follows. Part of the high-affinity ATP-driven potassium transport (or Kdp) system, which catalyzes the hydrolysis of ATP coupled with the electrogenic transport of potassium into the cytoplasm. This subunit binds the periplasmic potassium ions and delivers the ions to the membrane domain of KdpB through an intramembrane tunnel. The sequence is that of Potassium-transporting ATPase potassium-binding subunit from Pseudomonas fluorescens (strain SBW25).